Reading from the N-terminus, the 71-residue chain is Long neurotoxin 5 (71 aa).

Disulfide bonds link Cys-3-Cys-20, Cys-14-Cys-41, Cys-26-Cys-30, Cys-45-Cys-56, and Cys-57-Cys-62.

This sequence belongs to the three-finger toxin family. Long-chain subfamily. Type II alpha-neurotoxin sub-subfamily. Expressed by the venom gland.

The protein localises to the secreted. In terms of biological role, binds with high affinity to muscular (alpha-1/CHRNA1) and neuronal (alpha-7/CHRNA7) nicotinic acetylcholine receptor (nAChR) and inhibits acetylcholine from binding to the receptor, thereby impairing neuromuscular and neuronal transmission. The polypeptide is Long neurotoxin 5 (Naja naja (Indian cobra)).